The following is a 321-amino-acid chain: Lactamase-like protein notP (321 aa).

Residues H108, H110, D112, and H113 each coordinate Zn(2+). Residue D112 is the Proton donor/acceptor of the active site.

Belongs to the metallo-beta-lactamase superfamily. It depends on Zn(2+) as a cofactor.

Lactamase-like protein; part of the gene cluster that mediates the biosynthesis of notoamide, a fungal indole alkaloid that belongs to a family of natural products containing a characteristic bicyclo[2.2.2]diazaoctane core. The first step of notoamide biosynthesis involves coupling of L-proline and L-tryptophan by the bimodular NRPS notE, to produce cyclo-L-tryptophan-L-proline called brevianamide F. The reverse prenyltransferase notF then acts as a deoxybrevianamide E synthase and converts brevianamide F to deoxybrevianamide E via reverse prenylation at C-2 of the indole ring leading to the bicyclo[2.2.2]diazaoctane core. Deoxybrevianamide E is further hydroxylated at C-6 of the indole ring, likely catalyzed by the cytochrome P450 monooxygenase notG, to yield 6-hydroxy-deoxybrevianamide E. 6-hydroxy-deoxybrevianamide E is a specific substrate of the prenyltransferase notC for normal prenylation at C-7 to produce 6-hydroxy-7-prenyl-deoxybrevianamide, also called notoamide S. As the proposed pivotal branching point in notoamide biosynthesis, notoamide S can be diverted to notoamide E through an oxidative pyran ring closure putatively catalyzed by either notH cytochrome P450 monooxygenase or the notD FAD-linked oxidoreductase. This step would be followed by an indole 2,3-epoxidation-initiated pinacol-like rearrangement catalyzed by the notB FAD-dependent monooxygenase leading to the formation of notoamide C and notoamide D. On the other hand notoamide S is converted to notoamide T by notH (or notD), a bifunctional oxidase that also functions as the intramolecular Diels-Alderase responsible for generation of (+)-notoamide T. To generate antipodal (-)-notoaminide T, notH' (or notD') in Aspergillus versicolor is expected to catalyze a Diels-Alder reaction leading to the opposite stereochemistry. The remaining oxidoreductase notD (or notH) likely catalyzes the oxidative pyran ring formation to yield (+)-stephacidin A. The FAD-dependent monooxygenase notI is highly similar to notB and is predicted to catalyze a similar conversion from (+)-stephacidin A to (-)-notoamide B via the 2,3-epoxidation of (+)-stephacidin A followed by a pinacol-type rearrangement. Finally, it remains unclear which enzyme could be responsible for the final hydroxylation steps leading to notoamide A and sclerotiamide. The function of notP in the notoamide biosynthesis has not been determined yet. The chain is Lactamase-like protein notP from Aspergillus sp. (strain MF297-2).